The sequence spans 101 residues: Apolipoprotein C-II (101 aa).

Positions 1 to 22 (MGTRFLLALFLVLLVLGFEVQG) are cleaved as a signal peptide. The lipid binding stretch occupies residues 66–74 (TVDEKLRDM). Positions 78 to 101 (STAAMSTYAGILTDQVLSMLKGEE) are lipoprotein lipase cofactor.

It belongs to the apolipoprotein C2 family. In terms of processing, proapolipoprotein C-II is synthesized as a sialic acid containing glycoprotein which is subsequently desialylated prior to its proteolytic processing. Post-translationally, proapolipoprotein C-II, the major form found in plasma undergoes proteolytic cleavage of its N-terminal hexapeptide to generate apolipoprotein C-II, which occurs as the minor form in plasma.

Its subcellular location is the secreted. Its function is as follows. Component of chylomicrons, very low-density lipoproteins (VLDL), low-density lipoproteins (LDL), and high-density lipoproteins (HDL) in plasma. Plays an important role in lipoprotein metabolism as an activator of lipoprotein lipase. Both proapolipoprotein C-II and apolipoprotein C-II can activate lipoprotein lipase. The sequence is that of Apolipoprotein C-II (APOC2) from Plecturocebus moloch (Dusky titi monkey).